Reading from the N-terminus, the 322-residue chain is MFEIHPVKKVSVVIPVYNEQESLPELIRRTTTACESLGKEYEILLIDDGSSDNSAHMLVEASQAENSHIVSILINRNYGQHSAIMAGFSHVTGDLIITLDADLQNPPEEIPRLVAKADEGYDVVGTVRQNRQDSWFRKTASKMINRLIQRTTGKAMGDYGCMLRAYRRHIVDAMLHCHERSTFIPILANIFARRAIEIPVHHAEREFGESKYSFMRLINLMYDLVTCLTTTPLRMLSLLGSIIAIGGFSIAVLLVILRLTFGPQWAAEGVFMLFAVLFTFIGAQFIGMGLLGEYIGRIYTDVRARPRYFVQQVIRPSSKENE.

At 1-235 the chain is on the cytoplasmic side; that stretch reads MFEIHPVKKV…TCLTTTPLRM (235 aa). Residues 236-256 form a helical membrane-spanning segment; that stretch reads LSLLGSIIAIGGFSIAVLLVI. Residues 257–269 are Periplasmic-facing; the sequence is LRLTFGPQWAAEG. A helical membrane pass occupies residues 270–290; it reads VFMLFAVLFTFIGAQFIGMGL. Over 291–322 the chain is Cytoplasmic; it reads LGEYIGRIYTDVRARPRYFVQQVIRPSSKENE.

The protein belongs to the glycosyltransferase 2 family.

The protein localises to the cell inner membrane. It catalyses the reaction UDP-4-deoxy-4-formamido-beta-L-arabinose + di-trans,octa-cis-undecaprenyl phosphate = 4-deoxy-4-formamido-alpha-L-arabinopyranosyl di-trans,octa-cis-undecaprenyl phosphate + UDP. It functions in the pathway glycolipid biosynthesis; 4-amino-4-deoxy-alpha-L-arabinose undecaprenyl phosphate biosynthesis; 4-amino-4-deoxy-alpha-L-arabinose undecaprenyl phosphate from UDP-4-deoxy-4-formamido-beta-L-arabinose and undecaprenyl phosphate: step 1/2. It participates in bacterial outer membrane biogenesis; lipopolysaccharide biosynthesis. Its function is as follows. Catalyzes the transfer of 4-deoxy-4-formamido-L-arabinose from UDP to undecaprenyl phosphate. The modified arabinose is attached to lipid A and is required for resistance to polymyxin and cationic antimicrobial peptides. The polypeptide is Undecaprenyl-phosphate 4-deoxy-4-formamido-L-arabinose transferase (Shigella flexneri).